The primary structure comprises 270 residues: Elongation factor Ts (270 aa).

The involved in Mg(2+) ion dislocation from EF-Tu stretch occupies residues 81–84 (TDFV).

This sequence belongs to the EF-Ts family.

It is found in the cytoplasm. Its function is as follows. Associates with the EF-Tu.GDP complex and induces the exchange of GDP to GTP. It remains bound to the aminoacyl-tRNA.EF-Tu.GTP complex up to the GTP hydrolysis stage on the ribosome. This is Elongation factor Ts from Wigglesworthia glossinidia brevipalpis.